A 76-amino-acid polypeptide reads, in one-letter code: Translational regulator CsrA (76 aa).

Belongs to the CsrA/RsmA family. Homodimer; the beta-strands of each monomer intercalate to form a hydrophobic core, while the alpha-helices form wings that extend away from the core.

The protein localises to the cytoplasm. Functionally, a translational regulator that binds mRNA to regulate translation initiation and/or mRNA stability. Usually binds in the 5'-UTR at or near the Shine-Dalgarno sequence preventing ribosome-binding, thus repressing translation. Its main target seems to be the major flagellin gene, while its function is anatagonized by FliW. The chain is Translational regulator CsrA from Helicobacter pylori (strain J99 / ATCC 700824) (Campylobacter pylori J99).